Consider the following 1015-residue polypeptide: DNA polymerase catalytic subunit (1015 aa).

This sequence belongs to the DNA polymerase type-B family. As to quaternary structure, forms a complex with the ssDNA-binding protein BALF2, the DNA polymerase processivity factor BMRF1, and the alkaline exonuclease BGLF5. Interacts with the putative helicase-primase complex composed of BBLF4, BSLF1 and BBLF2/3 proteins; these interactions may coordinate leading and lagging strand DNA synthesis at the replication fork.

It localises to the host nucleus. It catalyses the reaction DNA(n) + a 2'-deoxyribonucleoside 5'-triphosphate = DNA(n+1) + diphosphate. Replicates viral genomic DNA in the late phase of lytic infection, producing long concatemeric DNA. The replication complex is composed of six viral proteins: the DNA polymerase, processivity factor, primase, primase-associated factor, helicase, and ssDNA-binding protein. This Epstein-Barr virus (strain B95-8) (HHV-4) protein is DNA polymerase catalytic subunit.